The following is a 370-amino-acid chain: Putative transposase InsL for insertion sequence element IS186A (370 aa).

The protein belongs to the transposase 11 family.

Involved in the transposition of the insertion sequence IS186. This chain is Putative transposase InsL for insertion sequence element IS186A (insL1), found in Escherichia coli (strain K12).